A 409-amino-acid polypeptide reads, in one-letter code: Casein kinase II subunit alpha-1 (409 aa).

Positions 1–35 (MIDTLFFLFFLFFDSPLRRLLLLCAVLALRAPTAH) are cleaved as a signal peptide. N-linked (GlcNAc...) asparagine glycosylation occurs at Asn72. The Protein kinase domain occupies 110-395 (YEVVRKVGRG…AKEAMAHAYF (286 aa)). Residues 116–124 (VGRGKYSEV) and Lys139 contribute to the ATP site. N-linked (GlcNAc...) asparagine glycosylation is present at Asn188. Asp227 serves as the catalytic Proton acceptor.

This sequence belongs to the protein kinase superfamily. Ser/Thr protein kinase family. CK2 subfamily. In terms of assembly, heterotetramer of two catalytic alpha subunits and two regulatory beta subunits. Seems to be present in all plant organs. But seems to be less expressed than CKA2.

Its subcellular location is the nucleus. It localises to the nucleolus. The enzyme catalyses L-seryl-[protein] + ATP = O-phospho-L-seryl-[protein] + ADP + H(+). It catalyses the reaction L-threonyl-[protein] + ATP = O-phospho-L-threonyl-[protein] + ADP + H(+). Its activity is regulated as follows. Inhibited by heparin. Casein kinases are operationally defined by their preferential utilization of acidic proteins such as caseins as substrates. Phosphorylates casein in vitro. The alpha chain contains the catalytic site. The tetrameric holoenzyme CK2, composed of two alpha and two beta subunits, phosphorylates the transcription factor GBFl, resulting in stimulation of its DNA binding activity. CK2 phosphorylates the transcription factor PIF1 after an exposure to light, resulting in a proteasome-dependent degradation of PIF1 and promotion of photomorphogenesis. CK2 phosphorylates translation initiation factors. May participate in the regulation of the initiation of translation. Acts as a circadian clock component that maintains the correct period length through phosphorylation of CCA1. Required for the maintenance and control of genomic stability and chromatin structure. May act as an ectokinase that phosphorylates several extracellular proteins. The protein is Casein kinase II subunit alpha-1 of Arabidopsis thaliana (Mouse-ear cress).